The following is a 1368-amino-acid chain: Cingulin (1368 aa).

The interaction with TJP3/ZO3 and myosin stretch occupies residues 9–378 (MADQHIPVGQ…KQQRTVQSEF (370 aa)). Residues 9-435 (MADQHIPVGQ…EKLPSLQVQP (427 aa)) form a head region. The ZIM signature appears at 41-55 (QDSYGVAVRVQGIDG). 5 disordered regions span residues 71-264 (FGVQ…TKPL), 278-312 (GQVRGRTARRSQALKDERKRSQSLDGRKNYHDTAD), 1053-1080 (SRKEIGEAQKQAKEKTAEAERHQFNSSR), 1163-1183 (NRSRDQMEQQRAELNQERSRG), and 1308-1368 (QQEI…TSSC). The segment covering 83 to 97 (NASNTSPPNYQNYSS) has biased composition (polar residues). The interval 101–294 (GPSRSISSES…ARRSQALKDE (194 aa)) is interaction with F-actin. 2 stretches are compositionally biased toward low complexity: residues 116-132 (PYGSRGYRPSSSHYSSA) and 200-211 (SQSSRDSAWSRS). The interaction with TJP2/ZO2 stretch occupies residues 150–295 (SSLPRPLQAS…RRSQALKDER (146 aa)). A compositionally biased stretch (polar residues) spans 228-256 (SATSQQSTSVSNKTKKNGLSTSSPSNQSN). The span at 290–312 (ALKDERKRSQSLDGRKNYHDTAD) shows a compositional bias: basic and acidic residues. Residues 377–1368 (EFQLKSTPDL…TESNLQTSSC (992 aa)) form an interaction with myosin region. A coiled-coil region spans residues 436–1330 (GEDTISLGSQ…VMEKESKRKP (895 aa)). Basic and acidic residues predominate over residues 1320–1338 (KVMEKESKRKPIRPAHDDD). The tract at residues 1331–1368 (IRPAHDDDLSSDGEFGGPYDPSSITSLLTESNLQTSSC) is tail. The span at 1352–1368 (SSITSLLTESNLQTSSC) shows a compositional bias: polar residues.

The protein belongs to the cingulin family. Parallel homodimer. Interacts with TJP1/ZO1 and TJP2/ZO2 in vivo, and TJP3/ZO3, myosin and OCLN in vitro, possibly directly. Acts as an F-actin bundling protein in vitro. As to expression, localized on the cytoplasmic face of tight junctions of polarized epithelia and some endothelia.

It is found in the cell junction. It localises to the tight junction. In terms of biological role, probably plays a role in the formation and regulation of the tight junction (TJ) paracellular permeability barrier, possibly by linking ZO proteins to the actomyosin cytoskeleton. The chain is Cingulin from Xenopus laevis (African clawed frog).